The chain runs to 137 residues: Large ribosomal subunit protein uL16c (137 aa).

A compositionally biased stretch (basic residues) spans 1-17 (MLSPKKTRFRRQHRGRM). The disordered stretch occupies residues 1-21 (MLSPKKTRFRRQHRGRMKGLS).

It belongs to the universal ribosomal protein uL16 family. Part of the 50S ribosomal subunit.

It localises to the plastid. This is Large ribosomal subunit protein uL16c from Cuscuta obtusiflora (Peruvian dodder).